Here is a 286-residue protein sequence, read N- to C-terminus: MTIIVKAPAKINLVLDATAKRPDGYHDVHMVMTTVDLADRLELTELASGEIRMNAQHAYVPNDERNLAYKAAAVLKERFDIKSGVEIYLEKQIPVAAGLAGGSSDAAATLRGLNELWKLNLTLEQLAEIGSEVGSDVPFCVMGGTAIATGRGEKLEKLVSPPPCWVVLAKPTIGVSTADVYGALDLETAERPDVGAMIDAVKNQDFTAICESLGNVLESVTLPMHPEVEQIKAFMTSCGAEGVLMSGSGPTVFALTEHENRAQRLYNGLRGFCNEVYVVRLLGENH.

Lys10 is a catalytic residue. 94–104 contributes to the ATP binding site; the sequence is PVAAGLAGGSS. Asp136 is a catalytic residue.

This sequence belongs to the GHMP kinase family. IspE subfamily.

The enzyme catalyses 4-CDP-2-C-methyl-D-erythritol + ATP = 4-CDP-2-C-methyl-D-erythritol 2-phosphate + ADP + H(+). The protein operates within isoprenoid biosynthesis; isopentenyl diphosphate biosynthesis via DXP pathway; isopentenyl diphosphate from 1-deoxy-D-xylulose 5-phosphate: step 3/6. Its function is as follows. Catalyzes the phosphorylation of the position 2 hydroxy group of 4-diphosphocytidyl-2C-methyl-D-erythritol. In Exiguobacterium sibiricum (strain DSM 17290 / CCUG 55495 / CIP 109462 / JCM 13490 / 255-15), this protein is 4-diphosphocytidyl-2-C-methyl-D-erythritol kinase.